Consider the following 483-residue polypeptide: Acetyltransferase AOL_s00215g273 (483 aa).

The next 8 membrane-spanning stretches (helical) occupy residues 9–29, 33–53, 141–161, 191–211, 292–312, 334–354, 372–392, and 453–473; these read ALIGVTVIPTLILSLPTTSFV, IYPLPALLVLRALLWPPTEGL, VAYIFESMVSILSIYLGLYTC, IFQMVVAFMGIFAMVSNSVLV, FLVFSAFGVSGLLHSLAVYYG, VTGYFFYIQPFAITLEDFICW, WFVGMVYTLTWFTWGTAVLWI, and LGGYLYLYAYTTLEILGGSGF.

This sequence belongs to the wax synthase family.

It is found in the membrane. The protein operates within secondary metabolite biosynthesis; terpenoid biosynthesis. Functionally, acetyltransferase; part of the gene cluster that mediates the biosynthesis of sesquiterpenyl epoxy-cyclohexenoids (SECs) such as anthrobotrisins and arthrosporols, metabolites that possess a novel hybrid carbon skeleton consisting of a polyketide-derived epoxycyclohexenol combined with a terpenoid-derived monocyclic sesquiterpenol substructure (PKS-PTS hybrid). The SEC pathway plays an important role for fungal soil colonization via decreasing fungal nematode-capturing ability. The role of the acetyltransferase in SEC biosynthesis has still to be determined. The pathway begins with the biosynthesis of 6-methylsalicylic acid (6-MSA), the first precursor of the polyketide-derived epoxycyclohexenol in arthrosporols, by the polyketide synthase (PKS) AOL_s00215g283 via condensation of 1 acetate and 3 malonate units. The 6-methylsalicylic acid decarboxylase AOL_s00215g281 then catalyzes the decarboxylation of 6-methylsalicylic acid to yield m-cresol. The cytochrome P450 monooxygenase AOL_s00215g282 further oxidizes m-cresol to yield toluquinol. With the assistance of the oxidoreductase AOL_s00215g277, the polyprenyl transferase AOL_s00215g276 catalyzes the farnesylation of toluquinol to produce farnesyl hydroquinone, the hybrid precursor for biosynthesis of SECs. Farnesyl hydroquinone undergoes epoxidation and then subsequent dehydrogenation to form farnesyl epoxy-quinone, the first and simplest SEC. The cytochrome P450 monooxygenase AOL_s00215g278 and the FAD-dependent monooxygenase AOL_s00215g279 might be involved in the oxygenation of the phenol moiety, most likely in the epoxy formation. The cytochrome P450 monooxygenases AOL_s00215g274 and AOL_s00215g280 are involved in specific regional ketone reductions at respectively C-4 and C-1 of farnesyl epoxy-quinone PubMed:33823587. The sequence is that of Acetyltransferase AOL_s00215g273 from Arthrobotrys oligospora (strain ATCC 24927 / CBS 115.81 / DSM 1491) (Nematode-trapping fungus).